The primary structure comprises 255 residues: 3-alpha-(or 20-beta)-hydroxysteroid dehydrogenase (255 aa).

Residue 10 to 34 (IITGGARGLGAEAARQAVAAGARVV) participates in NAD(+) binding. Ser139 lines the substrate pocket. Tyr152 serves as the catalytic Proton acceptor.

Belongs to the short-chain dehydrogenases/reductases (SDR) family. Homotetramer.

It catalyses the reaction androstan-3alpha,17beta-diol + NAD(+) = 17beta-hydroxyandrostanone + NADH + H(+). It functions in the pathway lipid metabolism; C21-steroid hormone metabolism. This is 3-alpha-(or 20-beta)-hydroxysteroid dehydrogenase from Streptomyces exfoliatus (Streptomyces hydrogenans).